The sequence spans 160 residues: Nucleotide-binding protein CPS_1098 (160 aa).

This sequence belongs to the YajQ family.

In terms of biological role, nucleotide-binding protein. The protein is Nucleotide-binding protein CPS_1098 of Colwellia psychrerythraea (strain 34H / ATCC BAA-681) (Vibrio psychroerythus).